A 133-amino-acid polypeptide reads, in one-letter code: Small ribosomal subunit protein uS8 (133 aa).

This sequence belongs to the universal ribosomal protein uS8 family. As to quaternary structure, part of the 30S ribosomal subunit. Contacts proteins S5 and S12.

Its function is as follows. One of the primary rRNA binding proteins, it binds directly to 16S rRNA central domain where it helps coordinate assembly of the platform of the 30S subunit. The sequence is that of Small ribosomal subunit protein uS8 from Gloeothece citriformis (strain PCC 7424) (Cyanothece sp. (strain PCC 7424)).